The primary structure comprises 197 residues: Putative WUSCHEL-related homeobox 10 (197 aa).

Residues 75–139 (STRPRWTPTT…NRRARSKRKQ (65 aa)) constitute a DNA-binding region (homeobox; WUS-type). The tract at residues 132–168 (RARSKRKQPPTTTITSSQADDAAVTTTEERGRCGDDS) is disordered. Residues 140-150 (PPTTTITSSQA) show a composition bias toward polar residues.

It belongs to the WUS homeobox family.

Its subcellular location is the nucleus. Functionally, potential transcription factor that plays a central role during developmental processes. This chain is Putative WUSCHEL-related homeobox 10 (WOX10), found in Arabidopsis thaliana (Mouse-ear cress).